The following is a 212-amino-acid chain: Photosynthetic NDH subunit of subcomplex B 5, chloroplastic (212 aa).

The N-terminal 48 residues, 1–48 (MATVTILSPKSIPKVTDSKFGARVSDQIVNVVKCGKSGRRLKLAKLVS), are a transit peptide targeting the chloroplast. Helical transmembrane passes span 115 to 135 (FQGLISCMFLPAIALGMYFDA) and 136 to 156 (PGEYLFIGAALFTVVFCIIEM).

As to quaternary structure, part of the chloroplast NDH complex, composed of a mixture of chloroplast and nucleus encoded subunits. Component of the NDH subcomplex B, at least composed of PnsB1, PnsB2, PnsB3, PnsB4 and PnsB5.

The protein resides in the plastid. Its subcellular location is the chloroplast membrane. Its function is as follows. NDH shuttles electrons from NAD(P)H:plastoquinone, via FMN and iron-sulfur (Fe-S) centers, to quinones in the photosynthetic chain and possibly in a chloroplast respiratory chain. The immediate electron acceptor for the enzyme in this species is believed to be plastoquinone. Couples the redox reaction to proton translocation, and thus conserves the redox energy in a proton gradient. This is Photosynthetic NDH subunit of subcomplex B 5, chloroplastic from Arabidopsis thaliana (Mouse-ear cress).